The following is a 156-amino-acid chain: UPF0266 membrane protein NT01EI_1718 (156 aa).

The next 3 membrane-spanning stretches (helical) occupy residues 6 to 26, 46 to 63, and 67 to 87; these read IALL…EAIM, DSLI…RNIS, and APFT…IFYL.

This sequence belongs to the UPF0266 family.

The protein resides in the cell inner membrane. The sequence is that of UPF0266 membrane protein NT01EI_1718 from Edwardsiella ictaluri (strain 93-146).